Reading from the N-terminus, the 298-residue chain is GTP cyclohydrolase FolE2 (298 aa).

Belongs to the GTP cyclohydrolase IV family.

The enzyme catalyses GTP + H2O = 7,8-dihydroneopterin 3'-triphosphate + formate + H(+). Its pathway is cofactor biosynthesis; 7,8-dihydroneopterin triphosphate biosynthesis; 7,8-dihydroneopterin triphosphate from GTP: step 1/1. Converts GTP to 7,8-dihydroneopterin triphosphate. This chain is GTP cyclohydrolase FolE2, found in Xylella fastidiosa (strain M12).